Here is a 309-residue protein sequence, read N- to C-terminus: Dihydroorotate dehydrogenase B (NAD(+)), catalytic subunit (309 aa).

Residues S21 and 45-46 contribute to the FMN site; that span reads KA. Substrate is bound by residues K45 and 69–73; that span reads NAIGL. Positions 99 and 127 each coordinate FMN. Position 127 (N127) interacts with substrate. C130 acts as the Nucleophile in catalysis. FMN-binding residues include K165 and I191. 192–193 contacts substrate; it reads NT. Residues G217, 243 to 244, and 265 to 266 each bind FMN; these read GG and GT.

The protein belongs to the dihydroorotate dehydrogenase family. Type 1 subfamily. In terms of assembly, heterotetramer of 2 PyrK and 2 PyrD type B subunits. FMN serves as cofactor.

It is found in the cytoplasm. The catalysed reaction is (S)-dihydroorotate + NAD(+) = orotate + NADH + H(+). It functions in the pathway pyrimidine metabolism; UMP biosynthesis via de novo pathway; orotate from (S)-dihydroorotate (NAD(+) route): step 1/1. Catalyzes the conversion of dihydroorotate to orotate with NAD(+) as electron acceptor. In Exiguobacterium sibiricum (strain DSM 17290 / CCUG 55495 / CIP 109462 / JCM 13490 / 255-15), this protein is Dihydroorotate dehydrogenase B (NAD(+)), catalytic subunit (pyrD).